A 273-amino-acid chain; its full sequence is MDKYVVFGNPIAQSKSPFIHTLFARQTAQKMEYTAELAPADGFKLAADNFFSAGGRGCNITAPFKEDAYQYATQLSERAKLAGAVNTLKKLDDGGILGDNTDGEGLVQDLLLNQVELAGKRILLVGAGGAARGVILPLLAQNPVELVITNRTLSKAQQLADLFAPFGSVSSAAIDTLNQPDFDVIINSTSAGLSGQLPGLSESLIKHDMVCYDMVYSAQITAFNLWARDLGAGKVIDGLGMLVGQAAESFMLWRGLRPGAKQVLRELRRILQE.

Shikimate is bound by residues 14–16 and Thr61; that span reads SKS. Catalysis depends on Lys65, which acts as the Proton acceptor. Glu77 provides a ligand contact to NADP(+). 2 residues coordinate shikimate: Asn86 and Asp102. Residues 126–130, 150–155, and Met214 each bind NADP(+); these read GAGGA and NRTLSK. Tyr216 provides a ligand contact to shikimate. Residue Gly238 coordinates NADP(+).

The protein belongs to the shikimate dehydrogenase family. As to quaternary structure, homodimer.

The catalysed reaction is shikimate + NADP(+) = 3-dehydroshikimate + NADPH + H(+). It functions in the pathway metabolic intermediate biosynthesis; chorismate biosynthesis; chorismate from D-erythrose 4-phosphate and phosphoenolpyruvate: step 4/7. In terms of biological role, involved in the biosynthesis of the chorismate, which leads to the biosynthesis of aromatic amino acids. Catalyzes the reversible NADPH linked reduction of 3-dehydroshikimate (DHSA) to yield shikimate (SA). The protein is Shikimate dehydrogenase (NADP(+)) of Photobacterium profundum (strain SS9).